Here is a 332-residue protein sequence, read N- to C-terminus: Inositol 2-dehydrogenase 2 (332 aa).

This sequence belongs to the Gfo/Idh/MocA family. In terms of assembly, homotetramer.

The catalysed reaction is myo-inositol + NAD(+) = scyllo-inosose + NADH + H(+). Its function is as follows. Involved in the oxidation of myo-inositol (MI) to 2-keto-myo-inositol (2KMI or 2-inosose). This is Inositol 2-dehydrogenase 2 from Paenarthrobacter aurescens (strain TC1).